Here is a 495-residue protein sequence, read N- to C-terminus: Cytochrome P450 94C1 (495 aa).

A helical membrane pass occupies residues 2–22 (LLIISFTIVSFFFIIIFSLFH). Heme is bound at residue cysteine 439.

The protein belongs to the cytochrome P450 family. Heme is required as a cofactor.

The protein resides in the membrane. It is found in the endoplasmic reticulum membrane. The catalysed reaction is a 12-hydroxyjasmonyl-L-alpha-amino acid + 2 reduced [NADPH--hemoprotein reductase] + 2 O2 = a 12-hydroxy-12-oxojasmonyl-L-alpha-amino acid + 2 oxidized [NADPH--hemoprotein reductase] + 3 H2O + 3 H(+). Its function is as follows. Involved in the oxidation of the plant hormone jasmonoyl-L-isoleucine (JA-Ile), a bioactive phytohormone of the jasmonate-mediated signaling pathway. Converts 12-hydroxy-JA-Ile (12OH-JA-Ile) to the carboxy-derivative 12COOH-JA-Ile. Exerts negative feedback control on JA-Ile levels and plays a role in attenuation of jasmonate responses. Also functions as in-chain fatty acids hydroxylase in vitro. Catalyzes the hydroxylation of 12-hydroxy-jasmonoyl-L-phenylalanine (12OH-JA-Phe) in vitro. Converts 12OH-JA-Phe to the carboxy-derivative 12COOH-JA-Phe. This is Cytochrome P450 94C1 from Arabidopsis thaliana (Mouse-ear cress).